The chain runs to 269 residues: Shikimate dehydrogenase (NADP(+)) (269 aa).

Shikimate is bound by residues 17 to 19 (SKS) and threonine 64. The active-site Proton acceptor is lysine 68. Glutamate 80 lines the NADP(+) pocket. Positions 89 and 105 each coordinate shikimate. Residues 130 to 134 (GAGGA), 154 to 159 (NRTRAK), and methionine 213 contribute to the NADP(+) site. Tyrosine 215 lines the shikimate pocket. An NADP(+)-binding site is contributed by glycine 237.

This sequence belongs to the shikimate dehydrogenase family. As to quaternary structure, homodimer.

It catalyses the reaction shikimate + NADP(+) = 3-dehydroshikimate + NADPH + H(+). It functions in the pathway metabolic intermediate biosynthesis; chorismate biosynthesis; chorismate from D-erythrose 4-phosphate and phosphoenolpyruvate: step 4/7. Functionally, involved in the biosynthesis of the chorismate, which leads to the biosynthesis of aromatic amino acids. Catalyzes the reversible NADPH linked reduction of 3-dehydroshikimate (DHSA) to yield shikimate (SA). In Neisseria meningitidis serogroup C / serotype 2a (strain ATCC 700532 / DSM 15464 / FAM18), this protein is Shikimate dehydrogenase (NADP(+)).